The primary structure comprises 298 residues: Junctional adhesion molecule B (298 aa).

An N-terminal signal peptide occupies residues 1–28 (MARSPQGLLMLLLLHYLIVALDYHKANG). Topologically, residues 29-236 (FSASKDHRQE…GKRMQVDVLN (208 aa)) are extracellular. Residues 32–128 (SKDHRQEVTV…GQNLQEDKVM (97 aa)) enclose the Ig-like V-type domain. Cystine bridges form between Cys51/Cys110 and Cys156/Cys214. An N-linked (GlcNAc...) asparagine glycan is attached at Asn99. One can recognise an Ig-like C2-type domain in the interval 135-238 (PAVPACEVPT…RMQVDVLNIS (104 aa)). A helical transmembrane segment spans residues 237 to 257 (ISGIIATVVVVAFVISVCGLG). Residues 258-298 (TCYAQRKGYFSKETSFQKGSPASKVTTMSENDFKHTKSFII) are Cytoplasmic-facing.

This sequence belongs to the immunoglobulin superfamily. Post-translationally, the expression in Sertoli cells is regulated by TGFB3 through ubiquitin-mediated proteasomal degradation. In terms of tissue distribution, expressed by bone marrow stromal cells (at protein level). Expressed in skin (at protein level). Expressed in testis by Sertoli cells (at protein level). Expressed by dorsal root ganglion and spinal cord neurons.

The protein resides in the cell membrane. It is found in the cell junction. The protein localises to the tight junction. Its function is as follows. Junctional adhesion protein that mediates heterotypic cell-cell interactions with its cognate receptor JAM3 to regulate different cellular processes. Plays a role in homing and mobilization of hematopoietic stem and progenitor cells within the bone marrow. At the surface of bone marrow stromal cells, it contributes to the retention of the hematopoietic stem and progenitor cells expressing JAM3. Plays a central role in leukocytes extravasation by facilitating not only transmigration but also tethering and rolling of leukocytes along the endothelium. Tethering and rolling of leukocytes are dependent on the binding by JAM2 of the integrin alpha-4/beta-1. Plays a role in spermatogenesis where JAM2 and JAM3, which are respectively expressed by Sertoli and germ cells, mediate an interaction between both cell types and play an essential role in the anchorage of germ cells onto Sertoli cells and the assembly of cell polarity complexes during spermatid differentiation. Also functions as an inhibitory somatodendritic cue that prevents the myelination of non-axonal parts of neurons. During myogenesis, it is involved in myocyte fusion. May also play a role in angiogenesis. This Mus musculus (Mouse) protein is Junctional adhesion molecule B.